Here is an 85-residue protein sequence, read N- to C-terminus: Antifungal protein (85 aa).

Residues Met-1–Gly-18 form the signal peptide. Repeat copies occupy residues Gln-19–Gln-25 and Gln-67–Gln-73. Residues Gln-19–Gln-73 form a 2 X 7 AA repeats of Q-H-G-H-G-G-Q region. A compositionally biased stretch (gly residues) spans His-22–His-32. The interval His-22–Tyr-85 is disordered. Basic and acidic residues predominate over residues Gly-63–Tyr-85.

Homodimer. The N-terminus is blocked. Hemolymph.

Its function is as follows. This protein inhibits the growth of a variety of fungal species. The antifungal activity of this protein is enhanced by the presence of sarcotoxin IA. The chain is Antifungal protein from Sarcophaga peregrina (Flesh fly).